A 417-amino-acid polypeptide reads, in one-letter code: Phosphoglycerate kinase 1 (417 aa).

The residue at position 2 (S2) is an N-acetylserine. S2 and S4 each carry phosphoserine. Residue K6 is modified to N6-succinyllysine. K11 is modified (N6-acetyllysine). 6 residues coordinate (2R)-3-phosphoglycerate: V23, D24, F25, N26, Q38, and R39. The tract at residues 38–43 (QRIKAA) is mitochondrial targeting region exposed following cis-trans isomerization by PIN1 and recognized by the TOM complex for mitochondrial translocation of the protein. An N6-acetyllysine; alternate modification is found at K48. K48 carries the N6-succinyllysine; alternate modification. (2R)-3-phosphoglycerate contacts are provided by S62, H63, G65, and R66. K75 carries the post-translational modification N6-acetyllysine. Residue Y76 is modified to Phosphotyrosine. An N6-acetyllysine mark is found at K86 and K91. K97 carries the post-translational modification N6-acetyllysine; alternate. K97 is modified (N6-(2-hydroxyisobutyryl)lysine; alternate). The (2R)-3-phosphoglycerate site is built by L122 and R123. K131 carries the N6-acetyllysine; alternate modification. Residue K131 is modified to N6-malonyllysine; alternate. K146 carries the N6-acetyllysine modification. (2R)-3-phosphoglycerate is bound by residues H170 and R171. K191 bears the N6-succinyllysine mark. Residue Y196 is modified to Phosphotyrosine. K199 bears the N6-acetyllysine mark. The residue at position 203 (S203) is a Phosphoserine. G214 serves as a coordination point for ADP. G214 is a binding site for CDP. 2 residues coordinate AMP: A215 and K216. A215 is a binding site for ATP. A215 is a Mg(2+) binding site. K216 carries the N6-(2-hydroxyisobutyryl)lysine modification. Mg(2+)-binding residues include A218 and D219. Residue D219 participates in CDP binding. Position 220 (K220) interacts with AMP. K220 contacts ATP. Position 220 is an N6-(2-hydroxyisobutyryl)lysine (K220). G238 contacts ADP. G238 contacts CDP. AMP is bound at residue G239. G239 contacts ATP. An N6-acetyllysine mark is found at K267 and K291. G313 contacts AMP. An ATP-binding site is contributed by G313. At K323 the chain carries N6-(2-hydroxyisobutyryl)lysine. The CDP site is built by G338, V340, and F343. Position 343 (F343) interacts with ADP. An AMP-binding site is contributed by E344. E344 contacts ATP. K361 bears the N6-acetyllysine mark. D375 and T376 together coordinate ATP. Residue D375 coordinates Mg(2+).

It belongs to the phosphoglycerate kinase family. As to quaternary structure, monomer. Interacts with kinase MAPK1/ERK2; the interaction is direct, occurs under hypoxic conditions, and promotes its interaction with PIN1. Interacts with peptidyl-prolyl cis-trans isomerase PIN1; the interaction is direct, occurs under hypoxic conditions, and targets the protein to the mitochondrion by promoting interactions with the TOM complex. Interacts with mitochondrial circRNA mcPGK1 (via its 2nd stem-loop); the interaction is direct and targets the protein to the mitochondrion by promoting interactions with the TOM complex. Interacts with pyruvate dehydrogenase kinase PDK1; the interaction is direct, occurs under hypoxic conditions and leads to PDK1-mediated inhibition of pyruvate dehydrogenase complex activity. It depends on Mg(2+) as a cofactor. In terms of processing, phosphorylated at Ser-203 by MAPK1/ERK2 under hypoxic conditions, which promotes its mitochondrial targeting. Testis, lung, brain, skeletal muscle, liver, intestine, and kidney (at protein level).

It is found in the cytoplasm. The protein localises to the cytosol. It localises to the mitochondrion matrix. The catalysed reaction is (2R)-3-phosphoglycerate + ATP = (2R)-3-phospho-glyceroyl phosphate + ADP. It catalyses the reaction L-seryl-[protein] + ATP = O-phospho-L-seryl-[protein] + ADP + H(+). It participates in carbohydrate degradation; glycolysis; pyruvate from D-glyceraldehyde 3-phosphate: step 2/5. Catalyzes one of the two ATP producing reactions in the glycolytic pathway via the reversible conversion of 1,3-diphosphoglycerate to 3-phosphoglycerate. Both L- and D- forms of purine and pyrimidine nucleotides can be used as substrates, but the activity is much lower on pyrimidines. In addition to its role as a glycolytic enzyme, it seems that PGK-1 acts as a polymerase alpha cofactor protein (primer recognition protein). Acts as a protein kinase when localized to the mitochondrion where it phosphorylates pyruvate dehydrogenase kinase PDK1 to inhibit pyruvate dehydrogenase complex activity and suppress the formation of acetyl-coenzyme A from pyruvate, and consequently inhibit oxidative phosphorylation and promote glycolysis. May play a role in sperm motility. The sequence is that of Phosphoglycerate kinase 1 (Pgk1) from Mus musculus (Mouse).